A 3431-amino-acid polypeptide reads, in one-letter code: KICSTOR complex protein SZT2 (3431 aa).

Disordered stretches follow at residues 699-731, 1067-1101, and 1162-1231; these read SKEP…PQQA, LRDP…TLPS, and KPKL…GADG. The interval 1082–1188 is mediates interaction with the GATOR1 complex; that stretch reads VAKDRAGNST…ATGTKATESQ (107 aa). 2 stretches are compositionally biased toward polar residues: residues 1088 to 1101 and 1182 to 1212; these read GNST…TLPS and TKAT…TPSC. Ser1275 carries the phosphoserine modification. A disordered region spans residues 1356–1378; it reads PPSPGPLSPGPFSSSIEEGPEPR. The residue at position 1415 (Ser1415) is a Phosphoserine. Disordered regions lie at residues 1512 to 1534, 1629 to 1678, 1806 to 1883, 2113 to 2148, 2450 to 2512, 2735 to 2756, and 2866 to 2899; these read YRES…SDAD, PPAS…HPGL, RAED…PGET, PPSL…SDAV, TEAG…LEEG, ASPP…GGPL, and ETCA…DVPP. Phosphothreonine is present on Thr1640. Polar residues predominate over residues 1641–1657; the sequence is SESSASFPRSPGQPSSL. Phosphoserine is present on Ser1650. Residues 1832 to 1854 are compositionally biased toward low complexity; that stretch reads PLISLPSLSQGGSQPGPSRGLSL. Residues 2118-2129 are compositionally biased toward polar residues; the sequence is LSRSQEPISSED. Residues 2460–2473 are compositionally biased toward basic and acidic residues; that stretch reads TTDDIVLDRPEDTR. Residues 2739–2749 show a composition bias toward low complexity; sequence LSREQGRLSGS.

As to quaternary structure, part of the KICSTOR complex composed of KPTN, ITFG2, KICS2 and SZT2. SZT2 probably serves as a link between the other three proteins in the KICSTOR complex and may mediate the direct interaction with the GATOR complex via GATOR1. The KICSTOR complex interacts directly with the GATOR1 complex and most probably indirectly with the GATOR2 complex in an amino acid-independent manner. Mostly expressed in brain, spinal cord and lung.

The protein resides in the lysosome membrane. It localises to the peroxisome. In terms of biological role, as part of the KICSTOR complex functions in the amino acid-sensing branch of the TORC1 signaling pathway. Recruits, in an amino acid-independent manner, the GATOR1 complex to the lysosomal membranes and allows its interaction with GATOR2 and the RAG GTPases. Functions upstream of the RAG GTPases and is required to negatively regulate mTORC1 signaling in absence of amino acids. In absence of the KICSTOR complex mTORC1 is constitutively localized to the lysosome and activated. The KICSTOR complex is also probably involved in the regulation of mTORC1 by glucose. May play a role in the cellular response to oxidative stress. This chain is KICSTOR complex protein SZT2, found in Mus musculus (Mouse).